The primary structure comprises 334 residues: GTP 3',8-cyclase (334 aa).

The 226-residue stretch at 11 to 236 (GFNRKIDYLR…ESTESSMGPA (226 aa)) folds into the Radical SAM core domain. R20 contributes to the GTP binding site. Residues C27 and C31 each coordinate [4Fe-4S] cluster. Y33 is an S-adenosyl-L-methionine binding site. A [4Fe-4S] cluster-binding site is contributed by C34. GTP is bound at residue R69. G73 provides a ligand contact to S-adenosyl-L-methionine. T100 is a GTP binding site. Position 124 (S124) interacts with S-adenosyl-L-methionine. GTP is bound at residue K161. Residue M195 coordinates S-adenosyl-L-methionine. The [4Fe-4S] cluster site is built by C260 and C263. 265 to 267 (RVR) is a GTP binding site. C277 is a binding site for [4Fe-4S] cluster.

This sequence belongs to the radical SAM superfamily. MoaA family. Monomer and homodimer. [4Fe-4S] cluster is required as a cofactor.

The catalysed reaction is GTP + AH2 + S-adenosyl-L-methionine = (8S)-3',8-cyclo-7,8-dihydroguanosine 5'-triphosphate + 5'-deoxyadenosine + L-methionine + A + H(+). Its pathway is cofactor biosynthesis; molybdopterin biosynthesis. In terms of biological role, catalyzes the cyclization of GTP to (8S)-3',8-cyclo-7,8-dihydroguanosine 5'-triphosphate. The polypeptide is GTP 3',8-cyclase (Pseudomonas putida (strain ATCC 47054 / DSM 6125 / CFBP 8728 / NCIMB 11950 / KT2440)).